A 459-amino-acid chain; its full sequence is MLKIFNTLTREKEEFKPINQNQVGMYVCGVTVYDLCHFGHGRTFVSFDVITRYLRFLGYNLRYVRNITDVDDKIIKRALENNETCDQLVERMIAEMHKDFDALNILRPDAEPRATKHIPEIIAMVDALLQRGHAYLAADGDVMFDVESFQKYGALSRQNLEQLQAGARVEIKSVKKNPMDFVLWKMSKPNEPSWDSPWGKGRPGWHIECSAMNSKELGNHFDIHGGGSDLMFPHHENEIAQSCCAHDGEYVNYWLHTGMLTINEEKMSKSLNNFFTIRDILTKYDAESVRYFFLTAQYRSLLDYSEENIGLARKALERLYTALRGCDWNSELPAQDQYVGAFKDAMDDDFNTPGALAVLFELAREINKLKAENPAQANHLAARLKHLAGVLGLLEQDPEAFLQGGAENEEVGKIEALIKQRNDARAEKNWAAADAARDALKEMGVVLEDGANGTSWRKL.

Cysteine 28 provides a ligand contact to Zn(2+). The short motif at 30–40 (VTVYDLCHFGH) is the 'HIGH' region element. Zn(2+)-binding residues include cysteine 209, histidine 234, and glutamate 238. Residues 266–270 (KMSKS) carry the 'KMSKS' region motif. Position 269 (lysine 269) interacts with ATP.

Belongs to the class-I aminoacyl-tRNA synthetase family. As to quaternary structure, monomer. The cofactor is Zn(2+).

The protein resides in the cytoplasm. The enzyme catalyses tRNA(Cys) + L-cysteine + ATP = L-cysteinyl-tRNA(Cys) + AMP + diphosphate. In Actinobacillus succinogenes (strain ATCC 55618 / DSM 22257 / CCUG 43843 / 130Z), this protein is Cysteine--tRNA ligase.